Consider the following 806-residue polypeptide: Protein translocase subunit SecA (806 aa).

ATP is bound by residues Gln-87, 105–109, and Asp-493; that span reads GEGKT.

This sequence belongs to the SecA family. Monomer and homodimer. Part of the essential Sec protein translocation apparatus which comprises SecA, SecYEG and auxiliary proteins SecDF. Other proteins may also be involved.

It localises to the cell membrane. It is found in the cytoplasm. It catalyses the reaction ATP + H2O + cellular proteinSide 1 = ADP + phosphate + cellular proteinSide 2.. Functionally, part of the Sec protein translocase complex. Interacts with the SecYEG preprotein conducting channel. Has a central role in coupling the hydrolysis of ATP to the transfer of proteins into and across the cell membrane, serving as an ATP-driven molecular motor driving the stepwise translocation of polypeptide chains across the membrane. The polypeptide is Protein translocase subunit SecA (Mycoplasma genitalium (strain ATCC 33530 / DSM 19775 / NCTC 10195 / G37) (Mycoplasmoides genitalium)).